The primary structure comprises 399 residues: Probable dual-specificity RNA methyltransferase RlmN (399 aa).

E97 (proton acceptor) is an active-site residue. The Radical SAM core domain occupies 103 to 381 (YPDRATVCVS…CTVRVERGVS (279 aa)). A disulfide bridge connects residues C110 and C386. The [4Fe-4S] cluster site is built by C117, C121, and C124. S-adenosyl-L-methionine is bound by residues 203-204 (GE), S235, 258-260 (SLH), and N343. The S-methylcysteine intermediate role is filled by C386.

The protein belongs to the radical SAM superfamily. RlmN family. Requires [4Fe-4S] cluster as cofactor.

Its subcellular location is the cytoplasm. The catalysed reaction is adenosine(2503) in 23S rRNA + 2 reduced [2Fe-2S]-[ferredoxin] + 2 S-adenosyl-L-methionine = 2-methyladenosine(2503) in 23S rRNA + 5'-deoxyadenosine + L-methionine + 2 oxidized [2Fe-2S]-[ferredoxin] + S-adenosyl-L-homocysteine. It catalyses the reaction adenosine(37) in tRNA + 2 reduced [2Fe-2S]-[ferredoxin] + 2 S-adenosyl-L-methionine = 2-methyladenosine(37) in tRNA + 5'-deoxyadenosine + L-methionine + 2 oxidized [2Fe-2S]-[ferredoxin] + S-adenosyl-L-homocysteine. Its function is as follows. Specifically methylates position 2 of adenine 2503 in 23S rRNA and position 2 of adenine 37 in tRNAs. This Roseiflexus sp. (strain RS-1) protein is Probable dual-specificity RNA methyltransferase RlmN.